A 118-amino-acid chain; its full sequence is Large ribosomal subunit protein bL19 (118 aa).

Belongs to the bacterial ribosomal protein bL19 family.

Functionally, this protein is located at the 30S-50S ribosomal subunit interface and may play a role in the structure and function of the aminoacyl-tRNA binding site. In Herpetosiphon aurantiacus (strain ATCC 23779 / DSM 785 / 114-95), this protein is Large ribosomal subunit protein bL19.